A 447-amino-acid chain; its full sequence is Membrane metalloprotease ARASP, chloroplastic (447 aa).

Residues 1 to 73 constitute a chloroplast transit peptide; the sequence is MLLNISSSPI…YPDGERFDFR (73 aa). Residue histidine 102 participates in Zn(2+) binding. Glutamate 103 is an active-site residue. Histidine 106 is a binding site for Zn(2+). Residues 177-197 traverse the membrane as a helical segment; it reads SIVVSAGIIANVIFAYAIIFV. Residues 202-244 form the PDZ domain; sequence VGLPVQEAFPGVLVPEVKTFSAASRDGLLSGDVILAVDGTELS. The next 2 membrane-spanning stretches (helical) occupy residues 379-399 and 413-433; these read LAVI…ALIL and VEQG…LFLI.

This sequence belongs to the peptidase M50A family. Zn(2+) serves as cofactor. Expressed in green seedlings and cotyledons. Low levels of expression in roots, siliques and seeds.

The protein localises to the plastid. Its subcellular location is the chloroplast inner membrane. Functionally, metalloprotease essential for chloroplast and plant development. May be involved in regulated intramembrane proteolysis (RIP). The chain is Membrane metalloprotease ARASP, chloroplastic from Arabidopsis thaliana (Mouse-ear cress).